The sequence spans 411 residues: Arginine deiminase (411 aa).

C401 serves as the catalytic Amidino-cysteine intermediate.

Belongs to the arginine deiminase family.

It localises to the cytoplasm. It catalyses the reaction L-arginine + H2O = L-citrulline + NH4(+). It participates in amino-acid degradation; L-arginine degradation via ADI pathway; carbamoyl phosphate from L-arginine: step 1/2. In Staphylococcus haemolyticus (strain JCSC1435), this protein is Arginine deiminase.